The sequence spans 152 residues: Ubiquitin-conjugating enzyme E2 N (152 aa).

One can recognise a UBC core domain in the interval 3 to 149 (GLPRRIIKET…ARAWTRLYAM (147 aa)). Residue K82 is modified to N6-acetyllysine. C87 acts as the Glycyl thioester intermediate in catalysis. A Glycyl lysine isopeptide (Lys-Gly) (interchain with G-Cter in ISG15) cross-link involves residue K92.

The protein belongs to the ubiquitin-conjugating enzyme family. In terms of assembly, heterodimer with UBE2V2. Interacts (UBE2V2-UBE2N heterodimer) with the E3 ligase STUB1 (via the U-box domain); the complex has a specific 'Lys-63'-linked polyubiquitination activity. Interacts with RNF8 and RNF168. Interacts with RNF11. Interacts with the E3 ligases, HLTF and SHPRH; the interactions promote the 'Lys-63'-linked polyubiquitination of PCNA upon genotoxic stress and lead to DNA repair. Interacts with ARIH2 (via RING-type 2). Interacts with OTUB1; leading to inhibit E2-conjugating activity. Interacts with RIGI and RNF135; involved in RIGI ubiquitination and activation. Post-translationally, conjugation to ISG15 impairs formation of the thioester bond with ubiquitin but not interaction with UBE2V2.

The enzyme catalyses S-ubiquitinyl-[E1 ubiquitin-activating enzyme]-L-cysteine + [E2 ubiquitin-conjugating enzyme]-L-cysteine = [E1 ubiquitin-activating enzyme]-L-cysteine + S-ubiquitinyl-[E2 ubiquitin-conjugating enzyme]-L-cysteine.. Its pathway is protein modification; protein ubiquitination. Activity is inhibited by binding to OTUB1, which prevents 'Lys-63'-linked polyubiquitination. Its function is as follows. The UBE2V1-UBE2N and UBE2V2-UBE2N heterodimers catalyze the synthesis of non-canonical 'Lys-63'-linked polyubiquitin chains. This type of polyubiquitination does not lead to protein degradation by the proteasome. Mediates transcriptional activation of target genes. Plays a role in the control of progress through the cell cycle and differentiation. Plays a role in the error-free DNA repair pathway and contributes to the survival of cells after DNA damage. Acts together with the E3 ligases, HLTF and SHPRH, in the 'Lys-63'-linked poly-ubiquitination of PCNA upon genotoxic stress, which is required for DNA repair. Appears to act together with E3 ligase RNF5 in the 'Lys-63'-linked polyubiquitination of JKAMP thereby regulating JKAMP function by decreasing its association with components of the proteasome and ERAD. Promotes TRIM5 capsid-specific restriction activity and the UBE2V1-UBE2N heterodimer acts in concert with TRIM5 to generate 'Lys-63'-linked polyubiquitin chains which activate the MAP3K7/TAK1 complex which in turn results in the induction and expression of NF-kappa-B and MAPK-responsive inflammatory genes. Together with RNF135 and UB2V1, catalyzes the viral RNA-dependent 'Lys-63'-linked polyubiquitination of RIGI to activate the downstream signaling pathway that leads to interferon beta production. UBE2V1-UBE2N together with TRAF3IP2 E3 ubiquitin ligase mediate 'Lys-63'-linked polyubiquitination of TRAF6, a component of IL17A-mediated signaling pathway. This chain is Ubiquitin-conjugating enzyme E2 N (UBE2N), found in Macaca fascicularis (Crab-eating macaque).